Consider the following 950-residue polypeptide: Leucine--tRNA ligase (950 aa).

The 'HIGH' region signature appears at 66 to 77 (PYPSGAGLHVGH). Residues 721–725 (KIGKS) carry the 'KMSKS' region motif. Lys-724 is an ATP binding site.

The protein belongs to the class-I aminoacyl-tRNA synthetase family.

It localises to the cytoplasm. It catalyses the reaction tRNA(Leu) + L-leucine + ATP = L-leucyl-tRNA(Leu) + AMP + diphosphate. The chain is Leucine--tRNA ligase from Nocardia farcinica (strain IFM 10152).